Consider the following 1043-residue polypeptide: P3N-PIPO polyprotein (1043 aa).

In terms of domain architecture, Peptidase S30 spans Lys-219 to Phe-362. Catalysis depends on for P1 proteinase activity residues His-270, Asp-279, and Ser-313. Positions Lys-414–Cys-417 match the Involved in interaction with stylet and aphid transmission motif. Positions Pro-672–Lys-674 match the Involved in virions binding and aphid transmission motif. The 123-residue stretch at Met-698–Gly-820 folds into the Peptidase C6 domain. Residues Cys-706 and His-779 each act as for helper component proteinase activity in the active site.

The protein belongs to the potyviridae P3N-PIPO polyprotein family. Interacts (via PIPO domain) with host PCaP1 protein; this interaction may help to anchor the movement complex to the plasma membrane from which the complex could move to the plasmodesmata. Post-translationally, potyviral RNA is expressed as two polyproteins which undergo post-translational proteolytic processing. Genome polyprotein is processed by NIa-pro, P1 and HC-pro proteinases resulting in the production of at least ten individual proteins. P3N-PIPO is cleaved by P1 and HC-pro proteinases resulting in the production of three individual proteins. The P1 proteinase and the HC-pro cleave only their respective C-termini autocatalytically.

The protein resides in the host cell junction. It is found in the host plasmodesma. The catalysed reaction is Hydrolyzes a Gly-|-Gly bond at its own C-terminus, commonly in the sequence -Tyr-Xaa-Val-Gly-|-Gly, in the processing of the potyviral polyprotein.. Cysteine protease that cleaves a Gly-Gly dipeptide at its own C-terminus. Required for aphid transmission and also has proteolytic activity. Interacts with virions and aphid stylets. Acts as a suppressor of RNA-mediated gene silencing, also known as post-transcriptional gene silencing (PTGS), a mechanism of plant viral defense that limits the accumulation of viral RNAs. May have RNA-binding activity. In terms of biological role, allows efficient cell to cell propagation, by bypassing the host cell wall barrier. Transports viral genome to neighboring plant cells directly through plasmosdesmata, without any budding. In Alliaria petiolata (Garlic mustard), this protein is P3N-PIPO polyprotein.